The following is a 470-amino-acid chain: Beta-Ala-Xaa dipeptidase (470 aa).

Histidine 87 is a Zn(2+) binding site. Aspartate 89 is a catalytic residue. Residue aspartate 119 coordinates Zn(2+). The active-site Proton acceptor is the glutamate 153. 2 residues coordinate Zn(2+): glutamate 154 and aspartate 177. Arginine 350 serves as a coordination point for substrate. Position 439 (histidine 439) interacts with Zn(2+).

This sequence belongs to the peptidase M20A family. Zn(2+) is required as a cofactor.

It localises to the cytoplasm. Fully inhibited by 1,10-phenanthroline or EDTA. Is a relatively unspecific dipeptidase cleaving a variety of dipeptides, notably those with an N-terminal beta-Ala or D-Ala residue, e.g. carnosine (beta-Ala-His). To a lesser extent, also shows aminopeptidase activity, since it is able to catalyze the removal of the N-terminal amino acid from a few distinct tripeptides. The polypeptide is Beta-Ala-Xaa dipeptidase (pepV) (Lactobacillus delbrueckii subsp. lactis).